Reading from the N-terminus, the 251-residue chain is Astacin (251 aa).

The signal sequence occupies residues 1-15 (MQCAVLLVLLGVVAA). Positions 16 to 49 (SPIIPEAARALYYNDGMFEGDIKLRAGRQPARVG) are cleaved as a propeptide — activation peptide. A Peptidase M12A domain is found at 50 to 248 (AAILGDEYLW…INNLYTNECS (199 aa)). 2 disulfides stabilise this stretch: cysteine 91/cysteine 247 and cysteine 113/cysteine 133. A Zn(2+)-binding site is contributed by histidine 141. Glutamate 142 is a catalytic residue. Zn(2+) is bound by residues histidine 145 and histidine 151. The propeptide occupies 250–251 (RH).

As to quaternary structure, monomer. Requires Zn(2+) as cofactor.

It catalyses the reaction Hydrolysis of peptide bonds in substrates containing five or more amino acids, preferentially with Ala in P1', and Pro in P2'.. Its function is as follows. Metalloprotease. This protease prefers to cleave in front of small aliphatic residues (P1'). The presence of Lys or Arg in the P1 and P2 position yields high-turnover substrates. In the P3 position the enzyme prefers Pro &gt; Val &gt; Leu &gt; Ala &gt; Gly. This is Astacin from Astacus astacus (Noble crayfish).